A 188-amino-acid chain; its full sequence is Elongation factor P (188 aa).

K34 carries the post-translational modification N6-(3,6-diaminohexanoyl)-5-hydroxylysine.

The protein belongs to the elongation factor P family. In terms of processing, may be beta-lysylated on the epsilon-amino group of Lys-34 by the combined action of EpmA and EpmB, and then hydroxylated on the C5 position of the same residue by EpmC (if this protein is present). Lysylation is critical for the stimulatory effect of EF-P on peptide-bond formation. The lysylation moiety may extend toward the peptidyltransferase center and stabilize the terminal 3-CCA end of the tRNA. Hydroxylation of the C5 position on Lys-34 may allow additional potential stabilizing hydrogen-bond interactions with the P-tRNA.

The protein resides in the cytoplasm. The protein operates within protein biosynthesis; polypeptide chain elongation. Involved in peptide bond synthesis. Alleviates ribosome stalling that occurs when 3 or more consecutive Pro residues or the sequence PPG is present in a protein, possibly by augmenting the peptidyl transferase activity of the ribosome. Modification of Lys-34 is required for alleviation. This Pectobacterium carotovorum subsp. carotovorum (strain PC1) protein is Elongation factor P.